Here is a 625-residue protein sequence, read N- to C-terminus: 1-deoxy-D-xylulose-5-phosphate synthase 1 (625 aa).

Thiamine diphosphate-binding positions include His-74 and 115 to 117; that span reads GHT. Mg(2+) is bound at residue Asp-146. Thiamine diphosphate contacts are provided by residues 147 to 148, Asn-175, Tyr-286, and Glu-368; that span reads GS. Residue Asn-175 participates in Mg(2+) binding.

This sequence belongs to the transketolase family. DXPS subfamily. As to quaternary structure, homodimer. The cofactor is Mg(2+). Thiamine diphosphate is required as a cofactor.

It carries out the reaction D-glyceraldehyde 3-phosphate + pyruvate + H(+) = 1-deoxy-D-xylulose 5-phosphate + CO2. It functions in the pathway metabolic intermediate biosynthesis; 1-deoxy-D-xylulose 5-phosphate biosynthesis; 1-deoxy-D-xylulose 5-phosphate from D-glyceraldehyde 3-phosphate and pyruvate: step 1/1. In terms of biological role, catalyzes the acyloin condensation reaction between C atoms 2 and 3 of pyruvate and glyceraldehyde 3-phosphate to yield 1-deoxy-D-xylulose-5-phosphate (DXP). The sequence is that of 1-deoxy-D-xylulose-5-phosphate synthase 1 from Geobacter metallireducens (strain ATCC 53774 / DSM 7210 / GS-15).